A 112-amino-acid polypeptide reads, in one-letter code: Evasin P1095 (112 aa).

Residues 1 to 23 (MELNAFTILQIAVFIAVGYHANT) form the signal peptide. Intrachain disulfides connect Cys48–Cys66, Cys52–Cys68, and Cys62–Cys79. The N-linked (GlcNAc...) asparagine glycan is linked to Asn51. The segment at 89–112 (GDPNDDPKINEATPQTQIFEKKRK) is disordered.

The protein localises to the secreted. Its function is as follows. Salivary chemokine-binding protein which binds to host chemokine CXCL8. This is Evasin P1095 from Ixodes ricinus (Common tick).